The following is a 418-amino-acid chain: Vasopressin V1a receptor (418 aa).

Residues 1 to 15 (MRFSGSPSPGPSNSS) show a composition bias toward low complexity. The tract at residues 1–20 (MRFSGSPSPGPSNSSRWWPL) is disordered. The Extracellular portion of the chain corresponds to 1 to 51 (MRFSGSPSPGPSNSSRWWPLDAGDANTSGDLAGLGEDGGPQADTRNEELAK). N-linked (GlcNAc...) asparagine glycosylation is found at Asn13 and Asn26. A helical transmembrane segment spans residues 52 to 75 (LEIAVLAVIFVVAVLGNSSVLLAL). The Cytoplasmic segment spans residues 76–87 (HRTPRKTSRMHL). A helical membrane pass occupies residues 88 to 109 (FIRHLSLADLAVAFFQVLPQLG). The Extracellular segment spans residues 110–124 (WDITYRFRGPDGLCR). Cys123 and Cys202 are joined by a disulfide. A helical transmembrane segment spans residues 125–146 (VVKHMQVFAMFASAYMLVVMTA). Topologically, residues 147–167 (DRYIAVCHPLKTLQQPARRSR) are cytoplasmic. Residues 168–189 (LMIAAAWVLSFVLSTPQYFVFS) form a helical membrane-spanning segment. Residues 190–217 (MVEVSNVTKTYDCWANFIHPWGLPAYVT) are Extracellular-facing. The N-linked (GlcNAc...) asparagine glycan is linked to Asn195. A helical membrane pass occupies residues 218–238 (WMTGSVFVAPVVILGTCYGFI). Over 239–293 (CYHIWRKVRGKTAGRQGGPAEGAGESALYRGVLHARCVSSVKTISRAKIRTVKMT) the chain is Cytoplasmic. The chain crosses the membrane as a helical span at residues 294-313 (FVIVTAYIVCWAPFFIIQMW). The Extracellular segment spans residues 314-331 (SAWDKNFSWVESENPATA). Asn319 is a glycosylation site (N-linked (GlcNAc...) asparagine). A helical membrane pass occupies residues 332–351 (IPALLASLNSCCNPWIYMFF). At 352 to 418 (SGHLLQDCAQ…KSIKFIPVST (67 aa)) the chain is on the cytoplasmic side. 2 S-palmitoyl cysteine lipidation sites follow: Cys365 and Cys366. A disordered region spans residues 377–418 (GSDSMSRRQTSFTNNRSPTNSMGTWKDSPKSSKSIKFIPVST). The segment covering 383 to 399 (RRQTSFTNNRSPTNSMG) has biased composition (polar residues). A Phosphoserine modification is found at Ser404.

Belongs to the G-protein coupled receptor 1 family. Vasopressin/oxytocin receptor subfamily.

The protein resides in the cell membrane. Functionally, receptor for arginine vasopressin. The activity of this receptor is mediated by G proteins which activate a phosphatidyl-inositol-calcium second messenger system. This chain is Vasopressin V1a receptor (AVPR1A), found in Ovis aries (Sheep).